A 66-amino-acid polypeptide reads, in one-letter code: Large ribosomal subunit protein bL35 (66 aa).

The interval 1–42 (MPKQKTHRASAKRFKRTANGGLKRHHAYTGHRFHGKTKKQRR) is disordered.

The protein belongs to the bacterial ribosomal protein bL35 family.

In Lactobacillus gasseri (strain ATCC 33323 / DSM 20243 / BCRC 14619 / CIP 102991 / JCM 1131 / KCTC 3163 / NCIMB 11718 / NCTC 13722 / AM63), this protein is Large ribosomal subunit protein bL35.